A 363-amino-acid chain; its full sequence is Aminomethyltransferase (363 aa).

This sequence belongs to the GcvT family. The glycine cleavage system is composed of four proteins: P, T, L and H.

The catalysed reaction is N(6)-[(R)-S(8)-aminomethyldihydrolipoyl]-L-lysyl-[protein] + (6S)-5,6,7,8-tetrahydrofolate = N(6)-[(R)-dihydrolipoyl]-L-lysyl-[protein] + (6R)-5,10-methylene-5,6,7,8-tetrahydrofolate + NH4(+). Its function is as follows. The glycine cleavage system catalyzes the degradation of glycine. In Picosynechococcus sp. (strain ATCC 27264 / PCC 7002 / PR-6) (Agmenellum quadruplicatum), this protein is Aminomethyltransferase.